A 763-amino-acid chain; its full sequence is Phosphoglycerol transferase I (763 aa).

4 consecutive transmembrane segments (helical) span residues 1–21 (MSEL…AWKA), 26–46 (WWFA…ITLF), 77–97 (ILPG…LGWI), and 108–128 (FGYS…SPAF).

Belongs to the OpgB family.

It is found in the cell inner membrane. The enzyme catalyses a phosphatidylglycerol + a membrane-derived-oligosaccharide D-glucose = a 1,2-diacyl-sn-glycerol + a membrane-derived-oligosaccharide 6-(glycerophospho)-D-glucose.. The protein operates within glycan metabolism; osmoregulated periplasmic glucan (OPG) biosynthesis. Transfers a phosphoglycerol residue from phosphatidylglycerol to the membrane-bound nascent glucan backbones. The polypeptide is Phosphoglycerol transferase I (Escherichia coli O127:H6 (strain E2348/69 / EPEC)).